Consider the following 830-residue polypeptide: Probable glucan 1,3-beta-glucosidase D (830 aa).

Over residues 1–34 (MPSQSRSRDRYRGRDTEYTRRRYPDEHDYSHDDH) the composition is skewed to basic and acidic residues. Residues 1-279 (MPSQSRSRDR…PPMDARWPKG (279 aa)) are disordered. Residues 1 to 301 (MPSQSRSRDR…GRPFWKQKKW (301 aa)) are Cytoplasmic-facing. Residues 35 to 51 (DYDYDDDDDDNDDLEQD) are compositionally biased toward acidic residues. 2 stretches are compositionally biased toward basic and acidic residues: residues 52-98 (VTER…ERRR) and 110-175 (QHRE…KHQS). The segment covering 181–194 (SASHLLSADALARL) has biased composition (low complexity). 3 stretches are compositionally biased toward basic and acidic residues: residues 198 to 215 (YEKE…AAKA), 228 to 243 (EQER…DRSR), and 253 to 264 (EEGRGPEMEFRR). A helical; Signal-anchor for type II membrane protein membrane pass occupies residues 302-322 (LIGIGVVILILVIVIPVAVVV). Residues 323 to 830 (SKKHNDKPNA…PDFGSLPEYY (508 aa)) lie on the Extracellular side of the membrane. The disordered stretch occupies residues 327–351 (NDKPNATTTQPDGTTPSNSNLDGLS). Positions 330 to 348 (PNATTTQPDGTTPSNSNLD) are enriched in polar residues. N-linked (GlcNAc...) asparagine glycans are attached at residues Asn-331, Asn-376, Asn-381, Asn-393, Asn-546, and Asn-558. The active-site Proton donor is Glu-597. N-linked (GlcNAc...) asparagine glycans are attached at residues Asn-610, Asn-636, Asn-669, and Asn-689. Glu-701 functions as the Nucleophile in the catalytic mechanism.

Belongs to the glycosyl hydrolase 5 (cellulase A) family.

Its subcellular location is the cell membrane. It catalyses the reaction Successive hydrolysis of beta-D-glucose units from the non-reducing ends of (1-&gt;3)-beta-D-glucans, releasing alpha-glucose.. Glucosidase involved in the degradation of cellulosic biomass. Active on lichenan. This Aspergillus clavatus (strain ATCC 1007 / CBS 513.65 / DSM 816 / NCTC 3887 / NRRL 1 / QM 1276 / 107) protein is Probable glucan 1,3-beta-glucosidase D (exgD).